We begin with the raw amino-acid sequence, 458 residues long: Cytoplasmic tRNA 2-thiolation protein 2 (458 aa).

The protein belongs to the CTU2/NCS2 family.

The protein localises to the cytoplasm. Its pathway is tRNA modification; 5-methoxycarbonylmethyl-2-thiouridine-tRNA biosynthesis. Plays a central role in 2-thiolation of mcm(5)S(2)U at tRNA wobble positions of tRNA(Lys), tRNA(Glu) and tRNA(Gln). May act by forming a heterodimer with NCS6/CTU1 that ligates sulfur from thiocarboxylated URM1 onto the uridine of tRNAs at wobble position. The sequence is that of Cytoplasmic tRNA 2-thiolation protein 2 from Arabidopsis thaliana (Mouse-ear cress).